The chain runs to 283 residues: Bifunctional protein FolD (283 aa).

Residues 165 to 167, Ser-190, and Ile-231 contribute to the NADP(+) site; that span reads GRS.

The protein belongs to the tetrahydrofolate dehydrogenase/cyclohydrolase family. Homodimer.

It catalyses the reaction (6R)-5,10-methylene-5,6,7,8-tetrahydrofolate + NADP(+) = (6R)-5,10-methenyltetrahydrofolate + NADPH. It carries out the reaction (6R)-5,10-methenyltetrahydrofolate + H2O = (6R)-10-formyltetrahydrofolate + H(+). Its pathway is one-carbon metabolism; tetrahydrofolate interconversion. Its function is as follows. Catalyzes the oxidation of 5,10-methylenetetrahydrofolate to 5,10-methenyltetrahydrofolate and then the hydrolysis of 5,10-methenyltetrahydrofolate to 10-formyltetrahydrofolate. This chain is Bifunctional protein FolD, found in Herminiimonas arsenicoxydans.